A 220-amino-acid polypeptide reads, in one-letter code: Probable GTP-binding protein EngB (220 aa).

In terms of domain architecture, EngB-type G spans 41–219; sequence DRSEVCFAGR…RAEIAALAML (179 aa). Residues 49–56, 76–80, 96–99, 164–167, and 197–200 contribute to the GTP site; these read GRSNVGKS, GRTRE, DLPG, TKVD, and MTSA. The Mg(2+) site is built by S56 and T78.

This sequence belongs to the TRAFAC class TrmE-Era-EngA-EngB-Septin-like GTPase superfamily. EngB GTPase family. The cofactor is Mg(2+).

Necessary for normal cell division and for the maintenance of normal septation. In Hyphomonas neptunium (strain ATCC 15444), this protein is Probable GTP-binding protein EngB.